Here is a 263-residue protein sequence, read N- to C-terminus: Purine nucleoside phosphorylase SACOL1200 (263 aa).

Zn(2+) contacts are provided by histidine 79, cysteine 124, and histidine 141.

It belongs to the purine nucleoside phosphorylase YfiH/LACC1 family. Homodimer. Cu(2+) serves as cofactor. It depends on Zn(2+) as a cofactor.

The catalysed reaction is adenosine + phosphate = alpha-D-ribose 1-phosphate + adenine. The enzyme catalyses S-methyl-5'-thioadenosine + phosphate = 5-(methylsulfanyl)-alpha-D-ribose 1-phosphate + adenine. It carries out the reaction inosine + phosphate = alpha-D-ribose 1-phosphate + hypoxanthine. It catalyses the reaction adenosine + H2O + H(+) = inosine + NH4(+). Purine nucleoside enzyme that catalyzes the phosphorolysis of adenosine and inosine nucleosides, yielding D-ribose 1-phosphate and the respective free bases, adenine and hypoxanthine. Also catalyzes the phosphorolysis of S-methyl-5'-thioadenosine into adenine and S-methyl-5-thio-alpha-D-ribose 1-phosphate. Also has adenosine deaminase activity. This chain is Purine nucleoside phosphorylase SACOL1200, found in Staphylococcus aureus (strain COL).